The primary structure comprises 207 residues: A-type ATP synthase subunit E (207 aa).

The protein belongs to the V-ATPase E subunit family. Has multiple subunits with at least A(3), B(3), C, D, E, F, H, I and proteolipid K(x).

Its subcellular location is the cell membrane. Functionally, component of the A-type ATP synthase that produces ATP from ADP in the presence of a proton gradient across the membrane. The protein is A-type ATP synthase subunit E of Methanosphaera stadtmanae (strain ATCC 43021 / DSM 3091 / JCM 11832 / MCB-3).